The sequence spans 214 residues: Putative archaetidylserine decarboxylase proenzyme (214 aa).

Ser180 serves as the catalytic Schiff-base intermediate with substrate; via pyruvic acid. Ser180 is subject to Pyruvic acid (Ser); by autocatalysis.

It belongs to the phosphatidylserine decarboxylase family. PSD-A subfamily. As to quaternary structure, heterodimer of a large membrane-associated beta subunit and a small pyruvoyl-containing alpha subunit. Pyruvate is required as a cofactor. Is synthesized initially as an inactive proenzyme. Formation of the active enzyme involves a self-maturation process in which the active site pyruvoyl group is generated from an internal serine residue via an autocatalytic post-translational modification. Two non-identical subunits are generated from the proenzyme in this reaction, and the pyruvate is formed at the N-terminus of the alpha chain, which is derived from the carboxyl end of the proenzyme. The post-translation cleavage follows an unusual pathway, termed non-hydrolytic serinolysis, in which the side chain hydroxyl group of the serine supplies its oxygen atom to form the C-terminus of the beta chain, while the remainder of the serine residue undergoes an oxidative deamination to produce ammonia and the pyruvoyl prosthetic group on the alpha chain.

The protein localises to the cell membrane. It carries out the reaction archaetidylserine + H(+) = archaetidylethanolamine + CO2. Its function is as follows. Catalyzes the formation of archaetidylethanolamine (PtdEtn) from archaetidylserine (PtdSer). The chain is Putative archaetidylserine decarboxylase proenzyme from Methanopyrus kandleri (strain AV19 / DSM 6324 / JCM 9639 / NBRC 100938).